Consider the following 145-residue polypeptide: Globin-1 (145 aa).

Residues 1–145 form the Globin domain; sequence GISADQAKAL…VIVPGMKAGY (145 aa). Heme b-binding residues include histidine 63 and histidine 92.

This sequence belongs to the globin family. In terms of assembly, monomer.

In Liolophura japonica (Chiton), this protein is Globin-1.